Here is a 963-residue protein sequence, read N- to C-terminus: Importin-13 (963 aa).

20 HEAT repeats span residues 24 to 54 (ENVE…QAQA), 56 to 88 (PQAW…KISR), 95 to 135 (TDQY…LSMM), 142 to 179 (AVAD…EFQT), 194 to 231 (LAVE…SWVQ), 236 to 268 (LQDC…NAIS), 276 to 325 (VNTL…ALLD), 330 to 372 (WQSF…DDIL), 375 to 438 (EAEK…YEML), 440 to 476 (AELL…FQSI), 487 to 522 (VVPG…WLAD), 524 to 558 (PVMI…CREC), 562 to 600 (LPPY…LLSA), 603 to 648 (VEEI…SNLF), 676 to 716 (PVVV…VKTL), 720 to 754 (FAPM…VHIF), 761 to 803 (FPPI…ALKR), 815 to 845 (VKAV…TELL), 860 to 893 (EDGR…FALN), and 897 to 931 (FSLL…QQIL). The Importin N-terminal domain occupies 45-111 (AQKWLMQAQA…KAQLFTQITR (67 aa)).

The protein belongs to the importin beta family. As to quaternary structure, interacts with UBC9, RAN, RBM8A, eIF-1A and PAX6.

The protein resides in the cytoplasm. It is found in the nucleus. Its function is as follows. Functions in nuclear protein import as nuclear transport receptor. Serves as receptor for nuclear localization signals (NLS) in cargo substrates. Is thought to mediate docking of the importin/substrate complex to the nuclear pore complex (NPC) through binding to nucleoporin and the complex is subsequently translocated through the pore by an energy requiring, Ran-dependent mechanism. At the nucleoplasmic side of the NPC, Ran binds to the importin, the importin/substrate complex dissociates and importin is re-exported from the nucleus to the cytoplasm where GTP hydrolysis releases Ran. The directionality of nuclear import is thought to be conferred by an asymmetric distribution of the GTP- and GDP-bound forms of Ran between the cytoplasm and nucleus. Mediates the nuclear import of UBC9, the RBM8A/MAGOH complex, PAX6 and probably other members of the paired homeobox family. Also mediates nuclear export of eIF-1A, and the cytoplasmic release of eIF-1A is triggered by the loading of import substrates onto IPO13. The protein is Importin-13 (IPO13) of Bos taurus (Bovine).